We begin with the raw amino-acid sequence, 134 residues long: Probable thionin-2.4 (134 aa).

The first 24 residues, 1-24 (MEGKTLIVSVLIMSLFMAQNQVDA), serve as a signal peptide directing secretion. 3 cysteine pairs are disulfide-bonded: cysteine 27–cysteine 64, cysteine 28–cysteine 56, and cysteine 40–cysteine 50. Positions 71–134 (DILENTGDAV…KGSMNAVENA (64 aa)) are cleaved as a propeptide — acidic domain.

It belongs to the plant thionin (TC 1.C.44) family.

Its subcellular location is the secreted. Thionins are small plant proteins which are toxic to animal cells. They seem to exert their toxic effect at the level of the cell membrane. Their precise function is not known. In Arabidopsis thaliana (Mouse-ear cress), this protein is Probable thionin-2.4.